The primary structure comprises 1062 residues: Roc-COR-CHAT protease (1062 aa).

LRR repeat units lie at residues 70 to 94, 95 to 116, 115 to 141, 142 to 159, 160 to 180, 181 to 203, 204 to 226, and 228 to 249; these read LAGL…HLQQ, LRLL…GSMP, MPLL…ALQK, LDVS…SACP, ALWW…MPAG, FKAL…NGKL, PKLV…LLLP, and GLET…IRGS. Positions 470-660 constitute a COR domain; the sequence is DWLGVMEELQ…GLMWKDNVVF (191 aa). The disordered stretch occupies residues 836-856; it reads ERDNDHTGLSDSSDQEDETFT. Catalysis depends on residues His-931 and Cys-980.

Functionally, a dedicated protease for substrate gasdermin bGSDM; cleaves the bGSDM precursor, releasing the pore-forming moiety, which integrates into the membrane and triggers cell death. Probably involved in defense against bacteriophages. Expression of bGSDM and this neighboring protease is highly toxic in E.coli. This chain is Roc-COR-CHAT protease, found in Unknown prokaryotic organism.